A 177-amino-acid chain; its full sequence is Large ribosomal subunit protein uL6 (177 aa).

Over residues arginine 152 to arginine 171 the composition is skewed to basic and acidic residues. Residues arginine 152–lysine 177 form a disordered region.

The protein belongs to the universal ribosomal protein uL6 family. As to quaternary structure, part of the 50S ribosomal subunit.

In terms of biological role, this protein binds to the 23S rRNA, and is important in its secondary structure. It is located near the subunit interface in the base of the L7/L12 stalk, and near the tRNA binding site of the peptidyltransferase center. The protein is Large ribosomal subunit protein uL6 of Shewanella putrefaciens (strain CN-32 / ATCC BAA-453).